The primary structure comprises 206 residues: Dephospho-CoA kinase (206 aa).

A DPCK domain is found at 4-204; it reads IVGLTGGIGS…QFYLQQAENK (201 aa). Position 12 to 17 (12 to 17) interacts with ATP; sequence GSGKTT.

The protein belongs to the CoaE family.

It localises to the cytoplasm. It carries out the reaction 3'-dephospho-CoA + ATP = ADP + CoA + H(+). It functions in the pathway cofactor biosynthesis; coenzyme A biosynthesis; CoA from (R)-pantothenate: step 5/5. In terms of biological role, catalyzes the phosphorylation of the 3'-hydroxyl group of dephosphocoenzyme A to form coenzyme A. This chain is Dephospho-CoA kinase, found in Haemophilus influenzae (strain ATCC 51907 / DSM 11121 / KW20 / Rd).